The primary structure comprises 236 residues: 2,3,4,5-tetrahydropyridine-2,6-dicarboxylate N-acetyltransferase (236 aa).

The protein belongs to the transferase hexapeptide repeat family. DapH subfamily.

The catalysed reaction is (S)-2,3,4,5-tetrahydrodipicolinate + acetyl-CoA + H2O = L-2-acetamido-6-oxoheptanedioate + CoA. It participates in amino-acid biosynthesis; L-lysine biosynthesis via DAP pathway; LL-2,6-diaminopimelate from (S)-tetrahydrodipicolinate (acetylase route): step 1/3. Functionally, catalyzes the transfer of an acetyl group from acetyl-CoA to tetrahydrodipicolinate. This chain is 2,3,4,5-tetrahydropyridine-2,6-dicarboxylate N-acetyltransferase, found in Clostridium botulinum (strain ATCC 19397 / Type A).